The following is a 324-amino-acid chain: Reaction center protein M chain (324 aa).

The Cytoplasmic segment spans residues 2 to 51 (ADYQTIYTQIQARGPHITVSGEWGDNDRVGKPFYSYWLGKIGDAQIGPIY). A helical transmembrane segment spans residues 52 to 76 (LGASGIAAFAFGSTAILIILFNMAA). Residues 77–110 (EVHFDPLQFFRQFFWLGLYPPKAQYGMGIPPLHD) lie on the Periplasmic side of the membrane. A helical transmembrane segment spans residues 111 to 137 (GGWWLMAGLFMTLSLGSWWIRVYSRAR). The Cytoplasmic segment spans residues 138–142 (ALGLG). A helical transmembrane segment spans residues 143–166 (THIAWNFAAAIFFVLCIGCIHPTL). Topologically, residues 167-197 (VGSWSEGVPFGIWPHIDWLTAFSIRYGNFYY) are periplasmic. (7R,8Z)-bacteriochlorophyll b-binding residues include histidine 181 and histidine 201. Residues 198-223 (CPWHGFSIGFAYGCGLLFAAHGATIL) traverse the membrane as a helical segment. The Fe cation site is built by histidine 218 and glutamate 233. At 224 to 259 (AVARFGGDREIEQITDRGTAVERAALFWRWTIGFNA) the chain is on the cytoplasmic side. Tryptophan 251 contacts a ubiquinone. Residues 260-284 (TIESVHRWGWFFSLMVMVSASVGIL) form a helical membrane-spanning segment. A Fe cation-binding site is contributed by histidine 265. At 285-324 (LTGTFVDNWYLWCVKHGAAPDYPAYLPATPDPASLPGAPK) the chain is on the periplasmic side.

Belongs to the reaction center PufL/M/PsbA/D family. Reaction center is composed of four bacteriochlorophylls, two bacteriopheophytins, two ubiquinones, one iron, and three highly hydrophobic polypeptide chains (designated L, M, and H).

It is found in the cellular chromatophore membrane. The reaction center is a membrane-bound complex that mediates the initial photochemical event in the electron transfer process of photosynthesis. The polypeptide is Reaction center protein M chain (pufM) (Blastochloris viridis (Rhodopseudomonas viridis)).